The chain runs to 61 residues: Small ribosomal subunit protein uS14 (61 aa).

Positions 24, 27, 40, and 43 each coordinate Zn(2+).

The protein belongs to the universal ribosomal protein uS14 family. Zinc-binding uS14 subfamily. As to quaternary structure, part of the 30S ribosomal subunit. Contacts proteins S3 and S10. It depends on Zn(2+) as a cofactor.

Functionally, binds 16S rRNA, required for the assembly of 30S particles and may also be responsible for determining the conformation of the 16S rRNA at the A site. In Geotalea daltonii (strain DSM 22248 / JCM 15807 / FRC-32) (Geobacter daltonii), this protein is Small ribosomal subunit protein uS14.